Here is a 230-residue protein sequence, read N- to C-terminus: CASP-like protein 2A2 (230 aa).

A disordered region spans residues 1–23; it reads MEKKDEGNPPMAVMGSRDENEDV. At 1-29 the chain is on the cytoplasmic side; sequence MEKKDEGNPPMAVMGSRDENEDVKSTMRT. A helical transmembrane segment spans residues 30 to 50; the sequence is AETMLRLVPVALCVSALVVML. Over 51–71 the chain is Extracellular; sequence KNTQTNDYGSLSYSDLGAFRY. The chain crosses the membrane as a helical span at residues 72 to 92; that stretch reads LVNANGICAGYSLLSAVIVAM. Over 93–100 the chain is Cytoplasmic; sequence PRAWTMPQ. Residues 101 to 121 traverse the membrane as a helical segment; it reads AWTFFLLDQVLTYVILAAGTV. Residues 122 to 151 lie on the Extracellular side of the membrane; that stretch reads STEVLYLANKGDTSIAWSAACASFGGFCHK. The helical transmembrane segment at 152–172 threads the bilayer; sequence ALISTVITFVAVIFYAALSLV. At 173 to 230 the chain is on the cytoplasmic side; the sequence is SSYKLFSKYDAPVVTQSGEGIKTVTLGSPPPPPPPPPSNLHLHLHAKLACPAHNNSPN.

It belongs to the Casparian strip membrane proteins (CASP) family. Homodimer and heterodimers.

It is found in the cell membrane. This is CASP-like protein 2A2 from Populus trichocarpa (Western balsam poplar).